The chain runs to 692 residues: Epithelial sodium channel subunit alpha (692 aa).

Residues 1 to 67 form a disordered region; it reads MSSIKGNKLE…PAAPQQPTAE (67 aa). The Cytoplasmic portion of the chain corresponds to 1 to 108; sequence MSSIKGNKLE…CSQHNRMKTA (108 aa). A compositionally biased stretch (low complexity) spans 56-65; the sequence is PEPAAPQQPT. The chain crosses the membrane as a helical span at residues 109–129; that stretch reads FWAVLWLCTFGMMYWQFGLLF. Topologically, residues 130-585 are extracellular; the sequence is GEYFSYPVSL…SQWSLWFGSS (456 aa). 10 cysteine pairs are disulfide-bonded: C156/C328, C252/C259, C305/C312, C417/C502, C439/C479, C439/C498, C443/C494, C452/C479, C452/C502, and C454/C468. The segment at 198–266 is gating release of inhibition by proteolysis (GRIP); protease-sensitive region that is responsible for the proteolytic activation of the channel; sequence RSRRDLRGTL…SDCFYQTYSS (69 aa). The helical transmembrane segment at 586–606 threads the bilayer; sequence VLSVVEMAELIFDLLVITFLM. Over 607-692 the chain is Cytoplasmic; it reads LLRRFRSRYW…GSSACPLGGP (86 aa). The tract at residues 627–692 is disordered; that stretch reads EVASTLASSP…GSSACPLGGP (66 aa). Residues 628 to 637 show a composition bias toward polar residues; the sequence is VASTLASSPP. The span at 653–666 shows a compositional bias: pro residues; the sequence is GPAPSPALTAPPPA. The short motif at 663–667 is the PY motif; recruits WW domain-containing proteins and is thereby required for ubiquitination and inhibition of the channel by NEDD4 and NEDD4L element; sequence PPPAY. Residues 682-692 show a composition bias toward low complexity; it reads AGSSACPLGGP.

Belongs to the amiloride-sensitive sodium channel (TC 1.A.6) family. SCNN1A subfamily. Heterotrimer; containing an alpha/SCNN1A, a beta/SCNN1B and a gamma/SCNN1G subunit. Interacts with WWP1 (via WW domains). Interacts with WWP2 (via WW domains); inhibits the channel. Interacts with BPIFA1; the interaction is indirect via SCNN1B and inhibits the proteolytic processing of SCNN1A and SCNN1G and the activation of ENaC. Interacts with the full-length immature form of PCSK9 (pro-PCSK9). In terms of processing, ubiquitinated. Can be ubiquitinated at multiple sites and undergo monoubiquitination and polyubiquitination. Ubiquitination by NEDD4 or NEDD4L inhibits the ENaC channel through endocytosis, intracellular retention and degradation of its individual subunits. Post-translationally, N-glycosylated. ENaC is activated through the proteolytic maturation of its subunits. Furin cleaves the SCNN1A subunit, which results in a stepwise increase in the open probability of the channel due to the release of an inhibitory tract. BPIFA1, which is recruited by the SCNN1B subunit, prevents the proteolytic activation of ENaC.

It localises to the apical cell membrane. It is found in the cell projection. Its subcellular location is the cilium. The protein localises to the cytoplasmic granule. The protein resides in the cytoplasm. It localises to the cytoplasmic vesicle. It is found in the secretory vesicle. Its subcellular location is the acrosome. The protein localises to the flagellum. It carries out the reaction Na(+)(in) = Na(+)(out). Its activity is regulated as follows. Originally identified and characterized by its inhibition by the diuretic drug amiloride. This is one of the three pore-forming subunits of the heterotrimeric epithelial sodium channel (ENaC), a critical regulator of sodium balance and fluid homeostasis. ENaC operates in epithelial tissues, where it mediates the electrodiffusion of sodium ions from extracellular fluid through the apical membrane of cells, with water following osmotically. It plays a key role in maintaining sodium homeostasis through electrogenic sodium reabsorption in the kidneys. Additionally, ENaC is essential for airway surface liquid homeostasis, which is crucial for proper mucus clearance. This chain is Epithelial sodium channel subunit alpha, found in Pan troglodytes (Chimpanzee).